Consider the following 400-residue polypeptide: CCA-adding enzyme (400 aa).

The ATP site is built by Gly28 and Arg31. The CTP site is built by Gly28 and Arg31. Positions 41 and 43 each coordinate Mg(2+). 5 residues coordinate ATP: Arg112, Asp155, Arg158, Arg161, and Arg164. CTP contacts are provided by Arg112, Asp155, Arg158, Arg161, and Arg164.

This sequence belongs to the tRNA nucleotidyltransferase/poly(A) polymerase family. Bacterial CCA-adding enzyme type 3 subfamily. Homodimer. Mg(2+) serves as cofactor.

It catalyses the reaction a tRNA precursor + 2 CTP + ATP = a tRNA with a 3' CCA end + 3 diphosphate. The catalysed reaction is a tRNA with a 3' CCA end + 2 CTP + ATP = a tRNA with a 3' CCACCA end + 3 diphosphate. Functionally, catalyzes the addition and repair of the essential 3'-terminal CCA sequence in tRNAs without using a nucleic acid template. Adds these three nucleotides in the order of C, C, and A to the tRNA nucleotide-73, using CTP and ATP as substrates and producing inorganic pyrophosphate. tRNA 3'-terminal CCA addition is required both for tRNA processing and repair. Also involved in tRNA surveillance by mediating tandem CCA addition to generate a CCACCA at the 3' terminus of unstable tRNAs. While stable tRNAs receive only 3'-terminal CCA, unstable tRNAs are marked with CCACCA and rapidly degraded. The chain is CCA-adding enzyme from Oceanobacillus iheyensis (strain DSM 14371 / CIP 107618 / JCM 11309 / KCTC 3954 / HTE831).